A 2512-amino-acid chain; its full sequence is Fatty acid synthase (2512 aa).

N-acetylglutamate is present on Glu2. Positions Glu2–Pro406 constitute a Ketosynthase family 3 (KS3) domain. Catalysis depends on for beta-ketoacyl synthase activity residues Cys161, His293, and His331. Residues Gly427–Phe815 form an acyl and malonyl transferases region. Ser580 (for acyl/malonyl transferase activity) is an active-site residue. An acyl-CoA-binding positions include Asp646 to Thr647, Phe670, and Arg772. The tract at residues Pro844–Lys967 is N-terminal hotdog fold. Positions Pro844–Glu1111 constitute a PKS/mFAS DH domain. His878 acts as the Proton acceptor; for dehydratase activity in catalysis. Residues Ala984 to Glu1111 form a C-terminal hotdog fold region. The Proton donor; for dehydratase activity role is filled by Asp1034. Cys1475 bears the S-nitrosocysteine mark. The tract at residues Trp1638–Gln1866 is enoyl reductase. Val1675–Ala1692 is an NADP(+) binding site. N6-(pyridoxal phosphate)lysine is present on Lys1708. The tract at residues Tyr1867 to Val2119 is beta-ketoacyl reductase. Position 1889-1904 (Ser1889–Ala1904) interacts with NADP(+). Residue Cys2093 is modified to S-nitrosocysteine. The Carrier domain occupies Lys2120–Glu2200. Ser2158 is modified (O-(pantetheine 4'-phosphoryl)serine). Residues Lys2209–Glu2511 form a thioesterase region. Active-site for thioesterase activity residues include Ser2309 and His2482.

In terms of assembly, homodimer which is arranged in a head to tail fashion. In terms of processing, S-nitrosylation of Fatty acid synthase at cysteine residues Cys-1475 or Cys-2093 is important for the enzyme dimerization. In adipocytes, S-nitrosylation of Fatty acid synthase occurs under physiological conditions and gradually increases during adipogenesis.

The catalysed reaction is acetyl-CoA + n malonyl-CoA + 2n NADPH + 2n H(+) = a long-chain fatty acid + (n+1) CoA + n CO2 + 2n NADP(+).. The enzyme catalyses holo-[ACP] + acetyl-CoA = acetyl-[ACP] + CoA. It catalyses the reaction holo-[ACP] + malonyl-CoA = malonyl-[ACP] + CoA. It carries out the reaction a fatty acyl-[ACP] + malonyl-[ACP] + H(+) = a 3-oxoacyl-[ACP] + holo-[ACP] + CO2. The catalysed reaction is a (3R)-hydroxyacyl-[ACP] + NADP(+) = a 3-oxoacyl-[ACP] + NADPH + H(+). The enzyme catalyses a (3R)-hydroxyacyl-[ACP] = a (2E)-enoyl-[ACP] + H2O. It catalyses the reaction a 2,3-saturated acyl-[ACP] + NADP(+) = a (2E)-enoyl-[ACP] + NADPH + H(+). It carries out the reaction hexadecanoyl-[ACP] + H2O = hexadecanoate + holo-[ACP] + H(+). The catalysed reaction is acetyl-[ACP] + malonyl-[ACP] + H(+) = 3-oxobutanoyl-[ACP] + holo-[ACP] + CO2. The enzyme catalyses 3-oxobutanoyl-[ACP] + NADPH + H(+) = (3R)-hydroxybutanoyl-[ACP] + NADP(+). It catalyses the reaction (3R)-hydroxybutanoyl-[ACP] = (2E)-butenoyl-[ACP] + H2O. It carries out the reaction (2E)-butenoyl-[ACP] + NADPH + H(+) = butanoyl-[ACP] + NADP(+). The catalysed reaction is butanoyl-[ACP] + malonyl-[ACP] + H(+) = 3-oxohexanoyl-[ACP] + holo-[ACP] + CO2. The enzyme catalyses 3-oxohexanoyl-[ACP] + NADPH + H(+) = (3R)-hydroxyhexanoyl-[ACP] + NADP(+). It catalyses the reaction (3R)-hydroxyhexanoyl-[ACP] = (2E)-hexenoyl-[ACP] + H2O. It carries out the reaction (2E)-hexenoyl-[ACP] + NADPH + H(+) = hexanoyl-[ACP] + NADP(+). The catalysed reaction is hexanoyl-[ACP] + malonyl-[ACP] + H(+) = 3-oxooctanoyl-[ACP] + holo-[ACP] + CO2. The enzyme catalyses 3-oxooctanoyl-[ACP] + NADPH + H(+) = (3R)-hydroxyoctanoyl-[ACP] + NADP(+). It catalyses the reaction (3R)-hydroxyoctanoyl-[ACP] = (2E)-octenoyl-[ACP] + H2O. It carries out the reaction (2E)-octenoyl-[ACP] + NADPH + H(+) = octanoyl-[ACP] + NADP(+). The catalysed reaction is octanoyl-[ACP] + malonyl-[ACP] + H(+) = 3-oxodecanoyl-[ACP] + holo-[ACP] + CO2. The enzyme catalyses 3-oxodecanoyl-[ACP] + NADPH + H(+) = (3R)-hydroxydecanoyl-[ACP] + NADP(+). It catalyses the reaction (3R)-hydroxydecanoyl-[ACP] = (2E)-decenoyl-[ACP] + H2O. It carries out the reaction (2E)-decenoyl-[ACP] + NADPH + H(+) = decanoyl-[ACP] + NADP(+). The catalysed reaction is decanoyl-[ACP] + malonyl-[ACP] + H(+) = 3-oxododecanoyl-[ACP] + holo-[ACP] + CO2. The enzyme catalyses 3-oxododecanoyl-[ACP] + NADPH + H(+) = (3R)-hydroxydodecanoyl-[ACP] + NADP(+). It catalyses the reaction (3R)-hydroxydodecanoyl-[ACP] = (2E)-dodecenoyl-[ACP] + H2O. It carries out the reaction (2E)-dodecenoyl-[ACP] + NADPH + H(+) = dodecanoyl-[ACP] + NADP(+). The catalysed reaction is dodecanoyl-[ACP] + malonyl-[ACP] + H(+) = 3-oxotetradecanoyl-[ACP] + holo-[ACP] + CO2. The enzyme catalyses 3-oxotetradecanoyl-[ACP] + NADPH + H(+) = (3R)-hydroxytetradecanoyl-[ACP] + NADP(+). It catalyses the reaction (3R)-hydroxytetradecanoyl-[ACP] = (2E)-tetradecenoyl-[ACP] + H2O. It carries out the reaction (2E)-tetradecenoyl-[ACP] + NADPH + H(+) = tetradecanoyl-[ACP] + NADP(+). The catalysed reaction is tetradecanoyl-[ACP] + malonyl-[ACP] + H(+) = 3-oxohexadecanoyl-[ACP] + holo-[ACP] + CO2. The enzyme catalyses 3-oxohexadecanoyl-[ACP] + NADPH + H(+) = (3R)-hydroxyhexadecanoyl-[ACP] + NADP(+). It catalyses the reaction (3R)-hydroxyhexadecanoyl-[ACP] = (2E)-hexadecenoyl-[ACP] + H2O. It carries out the reaction (2E)-hexadecenoyl-[ACP] + NADPH + H(+) = hexadecanoyl-[ACP] + NADP(+). The catalysed reaction is hexadecanoyl-[ACP] + malonyl-[ACP] + H(+) = 3-oxooctadecanoyl-[ACP] + holo-[ACP] + CO2. The enzyme catalyses 3-oxooctadecanoyl-[ACP] + NADPH + H(+) = (3R)-hydroxyoctadecanoyl-[ACP] + NADP(+). It catalyses the reaction (3R)-hydroxyoctadecanoyl-[ACP] = (2E)-octadecenoyl-[ACP] + H2O. It carries out the reaction (2E)-octadecenoyl-[ACP] + NADPH + H(+) = octadecanoyl-[ACP] + NADP(+). The catalysed reaction is tetradecanoyl-[ACP] + H2O = tetradecanoate + holo-[ACP] + H(+). The enzyme catalyses octadecanoyl-[ACP] + H2O = octadecanoate + holo-[ACP] + H(+). It participates in lipid metabolism; fatty acid biosynthesis. Cerulenin, a potent non-competitive pharmacological inhibitor of FAS, binds covalently to the active site of the condensing enzyme region, inactivating a key enzyme step in fatty acid synthesis. Fatty acid synthetase is a multifunctional enzyme that catalyzes the de novo biosynthesis of long-chain saturated fatty acids starting from acetyl-CoA and malonyl-CoA in the presence of NADPH. This multifunctional protein contains 7 catalytic activities and a site for the binding of the prosthetic group 4'-phosphopantetheine of the acyl carrier protein ([ACP]) domain. The protein is Fatty acid synthase (FASN) of Gallus gallus (Chicken).